The chain runs to 54 residues: Large ribosomal subunit protein bL32c (54 aa).

It belongs to the bacterial ribosomal protein bL32 family.

It localises to the plastid. Its subcellular location is the chloroplast. The protein is Large ribosomal subunit protein bL32c of Cucumis sativus (Cucumber).